Here is a 113-residue protein sequence, read N- to C-terminus: Transcriptional regulator RamA (113 aa).

Residues 9–107 (DTIVEWIDDN…NQPPGAYRKE (99 aa)) form the HTH araC/xylS-type domain. 2 consecutive DNA-binding regions (H-T-H motif) follow at residues 26-47 (DDIA…LQYK) and 74-97 (VYDI…TRTF).

Monomer. Interacts with the C-terminus of RNAP subunit RpoA when part of class I or class II promoter complexes. Also interacts with sigma-70/RpoD in class II promoter complexes.

Functionally, transcriptional regulator. Binds to regulatory regions of target genes, including its own gene, efflux pump operon acrAB, antisense RNA gene micF, and various genes involved in lipid A biosynthesis, including lpxO and lpxL-2. Regulates expression of many genes, perhaps including its own; activates various lipid A biosynthetic genes, and as a result of activating acrAB, confers multidrug resistance. Plays a role in virulence and survival in host cells. The polypeptide is Transcriptional regulator RamA (Klebsiella pneumoniae subsp. pneumoniae (strain HS11286)).